Here is a 708-residue protein sequence, read N- to C-terminus: F-box only protein 43 (708 aa).

The tract at residues 35 to 55 (MSQRHSGQAGTEAGNGADSPP) is disordered. Phosphoserine is present on Ser-76. Thr-234 carries the phosphothreonine modification. Residues 320–426 (PSPEVRGSIS…ISEGQLSSDE (107 aa)) are disordered. Polar residues predominate over residues 327 to 337 (SISTPEDSGFN). Position 334 is a phosphoserine (Ser-334). Residues 374 to 385 (KTRHLGRSRRLS) are compositionally biased toward basic residues. Over residues 399-411 (EKQIVHPDSEKRA) the composition is skewed to basic and acidic residues. Residues 490-547 (MGIEKLDILTELKYRNLKHILAMVLESLTAESLCSVWKVSRNWREIVVQDKNANRRRK) form the F-box domain. The ZBR-type zinc finger occupies 636-684 (ALKPCPRCQSPAKYQPYKKRGLCSRTACGFDFCVLCLCAYHGSEECSRG). Zn(2+)-binding residues include Cys-640, Cys-643, Cys-658, Cys-663, Cys-668, Cys-671, His-676, and Cys-681. A disordered region spans residues 682–708 (SRGAAKPRNRKDALPGSAQSKRNLKRL).

As to quaternary structure, part of a SCF (SKP1-cullin-F-box) protein ligase complex. According to PubMed:34595750 interaction with SKP1 does not occur. Interacts with ANAPC2; the interaction is direct, ANAPC4, CDC16, CDC23; the interaction is direct, ANAPC10; the interaction is direct and CDC26, during spermatogenesis. May interact with CDC20. Post-translationally, phosphorylated on Ser-76, Thr-234 and Ser-334 in response to calcium, which is a prerequisite for ubiquitination and proteasomal degradation. In terms of processing, ubiquitinated in response to calcium, which promotes proteasomal degradation. In terms of tissue distribution, expressed in the testis.

It functions in the pathway protein modification; protein ubiquitination. Its function is as follows. Required to establish and maintain the arrest of oocytes at the second meiotic metaphase until fertilization. Acts by inhibiting the anaphase-promoting complex/cyclosome (APC/C) ubiquitin ligase. Probably recognizes and binds to some phosphorylated proteins and promotes their ubiquitination and degradation. Plays a vital role in modulating the ubiquitilation of CCNB1 and CDK1 during gametogenesis. This chain is F-box only protein 43 (FBXO43), found in Homo sapiens (Human).